Consider the following 178-residue polypeptide: Inorganic pyrophosphatase (178 aa).

Substrate-binding residues include Lys29, Arg43, and Tyr55. Positions 65, 70, and 102 each coordinate Mg(2+). Tyr141 provides a ligand contact to substrate.

Belongs to the PPase family. In terms of assembly, homohexamer. Mg(2+) is required as a cofactor.

It localises to the cytoplasm. The catalysed reaction is diphosphate + H2O = 2 phosphate + H(+). Functionally, catalyzes the hydrolysis of inorganic pyrophosphate (PPi) forming two phosphate ions. The chain is Inorganic pyrophosphatase from Rickettsia typhi (strain ATCC VR-144 / Wilmington).